A 221-amino-acid polypeptide reads, in one-letter code: PKHD-type hydroxylase A9601_13531 (221 aa).

The Fe2OG dioxygenase domain occupies 80–174; it reads LIHGIMFTKS…RIVCVGWIES (95 aa). Residues H98, D100, and H155 each contribute to the Fe cation site. Position 165 (R165) interacts with 2-oxoglutarate.

It depends on Fe(2+) as a cofactor. Requires L-ascorbate as cofactor.

The sequence is that of PKHD-type hydroxylase A9601_13531 from Prochlorococcus marinus (strain AS9601).